A 660-amino-acid polypeptide reads, in one-letter code: DNA mismatch repair protein MutL (660 aa).

The protein belongs to the DNA mismatch repair MutL/HexB family.

Its function is as follows. This protein is involved in the repair of mismatches in DNA. It is required for dam-dependent methyl-directed DNA mismatch repair. May act as a 'molecular matchmaker', a protein that promotes the formation of a stable complex between two or more DNA-binding proteins in an ATP-dependent manner without itself being part of a final effector complex. This Streptococcus equi subsp. equi (strain 4047) protein is DNA mismatch repair protein MutL.